Here is a 308-residue protein sequence, read N- to C-terminus: N-acetylneuraminate lyase (308 aa).

Aceneuramate contacts are provided by Thr-50 and Thr-51. Residue Tyr-142 is the Proton donor of the active site. Lys-172 (schiff-base intermediate with substrate) is an active-site residue. Residues Ser-174, Gly-198, Asp-200, Glu-201, and Ser-217 each contribute to the aceneuramate site.

The protein belongs to the DapA family. NanA subfamily. In terms of assembly, homotetramer.

It is found in the cytoplasm. The enzyme catalyses aceneuramate = aldehydo-N-acetyl-D-mannosamine + pyruvate. Its pathway is amino-sugar metabolism; N-acetylneuraminate degradation. Its function is as follows. Catalyzes the cleavage of N-acetylneuraminic acid (sialic acid) to form pyruvate and N-acetylmannosamine via a Schiff base intermediate. It prevents sialic acids from being recycled and returning to the cell surface. Involved in the N-glycolylneuraminic acid (Neu5Gc) degradation pathway. The protein is N-acetylneuraminate lyase of Gallus gallus (Chicken).